A 299-amino-acid polypeptide reads, in one-letter code: Acetaldehyde dehydrogenase 6 (299 aa).

The Acyl-thioester intermediate role is filled by C125. Residues 156-164 (GAGPGTRAN) and N275 each bind NAD(+).

It belongs to the acetaldehyde dehydrogenase family.

The enzyme catalyses acetaldehyde + NAD(+) + CoA = acetyl-CoA + NADH + H(+). This is Acetaldehyde dehydrogenase 6 (hpdG) from Rhodococcus jostii (strain RHA1).